We begin with the raw amino-acid sequence, 241 residues long: Probable transcriptional regulator PhnF (241 aa).

The 68-residue stretch at 11–78 folds into the HTH gntR-type domain; sequence PTRYQEIAAK…QGVGVLVLMR (68 aa). The H-T-H motif DNA-binding region spans 38–57; the sequence is EQQLAARFEVNRHTLRRAID.

In terms of biological role, belongs to an operon involved in alkylphosphonate uptake and C-P lyase. Exact function not known. By similarity could be a transcriptional regulator. The protein is Probable transcriptional regulator PhnF (phnF) of Escherichia coli (strain K12).